The chain runs to 345 residues: Phosphoribosylformylglycinamidine cyclo-ligase (345 aa).

Belongs to the AIR synthase family.

Its subcellular location is the cytoplasm. It catalyses the reaction 2-formamido-N(1)-(5-O-phospho-beta-D-ribosyl)acetamidine + ATP = 5-amino-1-(5-phospho-beta-D-ribosyl)imidazole + ADP + phosphate + H(+). It participates in purine metabolism; IMP biosynthesis via de novo pathway; 5-amino-1-(5-phospho-D-ribosyl)imidazole from N(2)-formyl-N(1)-(5-phospho-D-ribosyl)glycinamide: step 2/2. In Bifidobacterium longum subsp. infantis (strain ATCC 15697 / DSM 20088 / JCM 1222 / NCTC 11817 / S12), this protein is Phosphoribosylformylglycinamidine cyclo-ligase.